We begin with the raw amino-acid sequence, 132 residues long: MAAQKQAARKTRRRDRKSIPVGQAHIKSTFNNTIISITDPSGAVVSWASGGDVGFKGSRKSTPYAAGMAAESAARKAMEHGVKKVDVFVKGPGSGRETAIRSLQSAGLEVGSITDVTPQAFNGVRPPKRRRV.

The protein belongs to the universal ribosomal protein uS11 family. In terms of assembly, part of the 30S ribosomal subunit. Interacts with proteins S7 and S18. Binds to IF-3.

In terms of biological role, located on the platform of the 30S subunit, it bridges several disparate RNA helices of the 16S rRNA. Forms part of the Shine-Dalgarno cleft in the 70S ribosome. The sequence is that of Small ribosomal subunit protein uS11 from Bifidobacterium animalis subsp. lactis (strain AD011).